The chain runs to 205 residues: Protein phosphatase inhibitor 2 family member C (205 aa).

Disordered stretches follow at residues 1–51 and 70–114; these read MSAS…DESS and EPGT…DHSC. Residues 12 to 17 are required for binding PPP1CC; sequence KGILKN. Residues 19–34 are compositionally biased toward low complexity; sequence SSSGSSVATSGQQSGG. Residues 43-55 are required for binding PPP1CC; the sequence is KSQKWDESSILAT. Positions 84–102 are enriched in basic and acidic residues; the sequence is DSVRDVEGEDSVRGVEGKE. Residues 147–150 form a required for binding PPP1CC catalytic center, displacing metal ions and inhibition of PPP1CC catalytic activity region; that stretch reads HYNE. Residues 165 to 205 form a disordered region; it reads LQSEDDENEERPQATNEEKTAAEESEEAPLSGGLQTQSCDP. Positions 174 to 186 are enriched in basic and acidic residues; sequence ERPQATNEEKTAA.

It belongs to the protein phosphatase inhibitor 2 family.

Functionally, functions as a protein phosphatase inhibitor. It inhibits activity of the catalytic subunit of PP1 and weakly inhibits the activity of myosin-associated phosphates. The protein is Protein phosphatase inhibitor 2 family member C (PPP1R2C) of Macaca fascicularis (Crab-eating macaque).